The primary structure comprises 197 residues: 7-methyl-GTP pyrophosphatase (197 aa).

Asp-74 serves as the catalytic Proton acceptor.

The protein belongs to the Maf family. YceF subfamily. The cofactor is a divalent metal cation.

The protein localises to the cytoplasm. It catalyses the reaction N(7)-methyl-GTP + H2O = N(7)-methyl-GMP + diphosphate + H(+). Functionally, nucleoside triphosphate pyrophosphatase that hydrolyzes 7-methyl-GTP (m(7)GTP). May have a dual role in cell division arrest and in preventing the incorporation of modified nucleotides into cellular nucleic acids. The sequence is that of 7-methyl-GTP pyrophosphatase from Saccharophagus degradans (strain 2-40 / ATCC 43961 / DSM 17024).